Reading from the N-terminus, the 70-residue chain is DNA-directed RNA polymerase subunit epsilon (70 aa).

The protein belongs to the RNA polymerase subunit epsilon family. RNAP is composed of a core of 2 alpha, a beta and a beta' subunit. The core is associated with a delta subunit, and at least one of epsilon or omega. When a sigma factor is associated with the core the holoenzyme is formed, which can initiate transcription.

The enzyme catalyses RNA(n) + a ribonucleoside 5'-triphosphate = RNA(n+1) + diphosphate. Its function is as follows. A non-essential component of RNA polymerase (RNAP). This is DNA-directed RNA polymerase subunit epsilon from Bacillus cereus (strain ATCC 14579 / DSM 31 / CCUG 7414 / JCM 2152 / NBRC 15305 / NCIMB 9373 / NCTC 2599 / NRRL B-3711).